Here is a 562-residue protein sequence, read N- to C-terminus: Tissue-type plasminogen activator (562 aa).

The signal sequence occupies residues 1-22 (MDAMKRGLCCVLLLCGAVFVSP). Positions 23 to 32 (SQEIHARFRR) are excised as a propeptide. Positions 33–35 (GAR) are cleaved as a propeptide — removed by plasmin. Residues 39-81 (VICRDEKTQMIYQQHQSWLRPVLRSNRVEYCWCNSGRAQCHSV) form the Fibronectin type-I domain. Cystine bridges form between cysteine 41–cysteine 71, cysteine 69–cysteine 78, cysteine 86–cysteine 97, cysteine 91–cysteine 108, cysteine 110–cysteine 119, cysteine 127–cysteine 208, cysteine 148–cysteine 190, cysteine 179–cysteine 203, cysteine 215–cysteine 296, cysteine 236–cysteine 278, cysteine 267–cysteine 291, cysteine 299–cysteine 430, cysteine 342–cysteine 358, cysteine 350–cysteine 419, cysteine 444–cysteine 519, cysteine 476–cysteine 492, and cysteine 509–cysteine 537. Residues 42–52 (RDEKTQMIYQQ) form an important for binding to annexin A2 region. An EGF-like domain is found at 82-120 (PVKSCSEPRCFNGGTCQQALYFSDFVCQCPEGFAGKCCE). Threonine 96 is a glycosylation site (O-linked (Fuc) threonine). Kringle domains lie at 127–208 (CYED…TPAC) and 215–296 (CYFG…VPSC). Residue asparagine 152 is glycosylated (N-linked (GlcNAc...) asparagine). Asparagine 219 carries N-linked (GlcNAc...) asparagine; partial glycosylation. Residues 311–561 (IKGGLFADIA…YLDWIRDNMR (251 aa)) form the Peptidase S1 domain. Catalysis depends on charge relay system residues histidine 357 and aspartate 406. N-linked (GlcNAc...) asparagine glycosylation occurs at asparagine 483. Residue serine 513 is the Charge relay system of the active site.

Belongs to the peptidase S1 family. Heterodimer of chain A and chain B held by a disulfide bond. Forms a heterodimer with SERPINA5. Binds to fibrin with high affinity. This interaction leads to an increase in the catalytic efficiency of the enzyme between 100-fold and 1000-fold, due to an increase in affinity for plasminogen. Similarly, binding to heparin increases the activation of plasminogen. Binds to annexin A2, cytokeratin-8, fibronectin and laminin. Binds to mannose receptor and the low-density lipoprotein receptor-related protein (LRP1); these proteins are involved in TPA clearance. Yet unidentified interactions on endothelial cells and vascular smooth muscle cells (VSMC) lead to a 100-fold stimulation of plasminogen activation. In addition, binding to VSMC reduces TPA inhibition by PAI-1 by 30-fold. Binds LRP1B; binding is followed by internalization and degradation. Interacts with SERPINE1. In complex with SERPINE1, interacts with SORL1. Interacts with apyrase from Anopheles gambiae saliva; the interaction results in PLAT activation probably via an allosteric activation mechanism. In terms of processing, the single chain, almost fully active enzyme, can be further processed into a two-chain fully active form by a cleavage after Arg-310 catalyzed by plasmin, tissue kallikrein or factor Xa. Differential cell-specific N-linked glycosylation gives rise to two glycoforms, type I (glycosylated at Asn-219) and type II (not glycosylated at Asn-219). The single chain type I glycoform is less readily converted into the two-chain form by plasmin, and the two-chain type I glycoform has a lower activity than the two-chain type II glycoform in the presence of fibrin. Post-translationally, N-glycosylation of Asn-152; the bound oligomannosidic glycan is involved in the interaction with the mannose receptor. In terms of processing, characterization of O-linked glycan was studied in Bowes melanoma cell line. As to expression, synthesized in numerous tissues (including tumors) and secreted into most extracellular body fluids, such as plasma, uterine fluid, saliva, gingival crevicular fluid, tears, seminal fluid, and milk.

Its subcellular location is the secreted. The protein resides in the extracellular space. The enzyme catalyses Specific cleavage of Arg-|-Val bond in plasminogen to form plasmin.. Its activity is regulated as follows. Inhibited by SERPINA5. Inhibited by SERPINE1. In terms of biological role, converts the abundant, but inactive, zymogen plasminogen to plasmin by hydrolyzing a single Arg-Val bond in plasminogen. By controlling plasmin-mediated proteolysis, it plays an important role in tissue remodeling and degradation, in cell migration and many other physiopathological events. During oocyte activation, plays a role in cortical granule reaction in the zona reaction, which contributes to the block to polyspermy. The chain is Tissue-type plasminogen activator from Homo sapiens (Human).